The following is an 86-amino-acid chain: Small ribosomal subunit protein bS20 (86 aa).

The segment at 1-25 (MANSASSRKRARQAVKRNKHNSQIR) is disordered. Basic residues predominate over residues 7–25 (SRKRARQAVKRNKHNSQIR).

Belongs to the bacterial ribosomal protein bS20 family.

Its function is as follows. Binds directly to 16S ribosomal RNA. In Vesicomyosocius okutanii subsp. Calyptogena okutanii (strain HA), this protein is Small ribosomal subunit protein bS20.